The primary structure comprises 880 residues: Guanine nucleotide-binding protein subunit beta 2 (880 aa).

Serine 24 carries the phosphoserine modification. Kelch repeat units lie at residues asparagine 291–asparagine 339, histidine 377–isoleucine 425, and threonine 501–serine 552. The disordered stretch occupies residues phenylalanine 624–aspartate 649. Residues alanine 638 to serine 647 show a composition bias toward low complexity. A Kelch 4 repeat occupies threonine 691–serine 738.

G proteins are composed of 3 units, alpha, beta and gamma. GPB1 interacts with the alpha subunit GPA2.

It is found in the cytoplasm. The protein resides in the mitochondrion. Beta subunit of a guanine nucleotide-binding protein (G protein). G proteins are involved as modulators or transducers in various transmembrane signaling systems. The beta and gamma chains are required for the GTPase activity, for replacement of GDP by GTP, and for G protein-effector interaction. Involved in the determination of the cAMP level according to nutritional conditions, most probably as a regulator of cAMP phosphodiesterase. Required for the control of pseudohyphal and haploid invasive growth. This Saccharomyces cerevisiae (strain ATCC 204508 / S288c) (Baker's yeast) protein is Guanine nucleotide-binding protein subunit beta 2 (GPB2).